A 50-amino-acid polypeptide reads, in one-letter code: uncharacterized protein (50 aa).

Residues 5-19 form a helical membrane-spanning segment; that stretch reads IIIIVIVIIIFFFYL. The stretch at 19–50 forms a coiled coil; the sequence is LKQKKLTNCETQVVKVQKDIDEINLKLKKLNK.

It is found in the membrane. This is an uncharacterized protein from Acheta domesticus (House cricket).